The sequence spans 299 residues: Protease HtpX homolog (299 aa).

The next 2 membrane-spanning stretches (helical) occupy residues 15–35 (ILLLVFFLLLALVGYAVGYLF) and 39–59 (GLGGLVIALIIGFIYALSMIF). Residue His-143 participates in Zn(2+) binding. Residue Glu-144 is part of the active site. His-147 is a binding site for Zn(2+). A run of 2 helical transmembrane segments spans residues 158–178 (IAVALASAITMLSSMAGRMMW) and 198–218 (IIMLVVSLLAIVLAPLAATLV). Glu-227 is a binding site for Zn(2+).

Belongs to the peptidase M48B family. Requires Zn(2+) as cofactor.

It localises to the cell membrane. The chain is Protease HtpX homolog from Streptococcus pneumoniae serotype 4 (strain ATCC BAA-334 / TIGR4).